Reading from the N-terminus, the 442-residue chain is Glutamate-1-semialdehyde 2,1-aminomutase (442 aa).

K282 bears the N6-(pyridoxal phosphate)lysine mark.

The protein belongs to the class-III pyridoxal-phosphate-dependent aminotransferase family. HemL subfamily. As to quaternary structure, homodimer. It depends on pyridoxal 5'-phosphate as a cofactor.

It localises to the cytoplasm. The catalysed reaction is (S)-4-amino-5-oxopentanoate = 5-aminolevulinate. It participates in porphyrin-containing compound metabolism; protoporphyrin-IX biosynthesis; 5-aminolevulinate from L-glutamyl-tRNA(Glu): step 2/2. This Polaromonas naphthalenivorans (strain CJ2) protein is Glutamate-1-semialdehyde 2,1-aminomutase.